We begin with the raw amino-acid sequence, 47 residues long: Sperm protamine P1 (47 aa).

This sequence belongs to the protamine P1 family. In terms of tissue distribution, testis.

It is found in the nucleus. The protein localises to the chromosome. Its function is as follows. Protamines substitute for histones in the chromatin of sperm during the haploid phase of spermatogenesis. They compact sperm DNA into a highly condensed, stable and inactive complex. The protein is Sperm protamine P1 (PRM1) of Orcinus orca (Killer whale).